The primary structure comprises 181 residues: MIQDSEFFRMEGVPITKEEIRAVSIGKLNLDPEDVVLDIGCGSGGMSVEISKRSKFVYSIDNSEDAKNTTLNNLKKFNVENCTVSLGNAEDLISKFDFNKVFIGGTQNIEQILEILKEKNIERIVVNTIVLENSVKIINKFEELGYNVDFVNVSVSYGKKINSGHIMLSKNPITIITATLK.

S-adenosyl-L-methionine-binding positions include Thr16, Gly40–Gly44, Asp61, and Ala89.

Belongs to the methyltransferase superfamily. Archaeal-type CbiT family.

It catalyses the reaction Co-precorrin-6B + S-adenosyl-L-methionine = Co-precorrin-7 + S-adenosyl-L-homocysteine + CO2. It functions in the pathway cofactor biosynthesis; adenosylcobalamin biosynthesis; cob(II)yrinate a,c-diamide from sirohydrochlorin (anaerobic route): step 8/10. Functionally, catalyzes the methylation of C-15 in cobalt-precorrin-6B followed by the decarboxylation of C-12 to form cobalt-precorrin-7. The chain is Probable cobalt-precorrin-6B C(15)-methyltransferase (decarboxylating) from Methanococcus maripaludis (strain DSM 14266 / JCM 13030 / NBRC 101832 / S2 / LL).